Here is a 261-residue protein sequence, read N- to C-terminus: 5'-nucleotidase SurE (261 aa).

The a divalent metal cation site is built by D8, D9, S39, and N91.

The protein belongs to the SurE nucleotidase family. A divalent metal cation serves as cofactor.

It is found in the cytoplasm. The enzyme catalyses a ribonucleoside 5'-phosphate + H2O = a ribonucleoside + phosphate. Its function is as follows. Nucleotidase that shows phosphatase activity on nucleoside 5'-monophosphates. This Polaromonas sp. (strain JS666 / ATCC BAA-500) protein is 5'-nucleotidase SurE.